Consider the following 223-residue polypeptide: ATP phosphoribosyltransferase (223 aa).

Belongs to the ATP phosphoribosyltransferase family. Short subfamily. As to quaternary structure, heteromultimer composed of HisG and HisZ subunits.

Its subcellular location is the cytoplasm. The catalysed reaction is 1-(5-phospho-beta-D-ribosyl)-ATP + diphosphate = 5-phospho-alpha-D-ribose 1-diphosphate + ATP. The protein operates within amino-acid biosynthesis; L-histidine biosynthesis; L-histidine from 5-phospho-alpha-D-ribose 1-diphosphate: step 1/9. Its function is as follows. Catalyzes the condensation of ATP and 5-phosphoribose 1-diphosphate to form N'-(5'-phosphoribosyl)-ATP (PR-ATP). Has a crucial role in the pathway because the rate of histidine biosynthesis seems to be controlled primarily by regulation of HisG enzymatic activity. In Bordetella bronchiseptica (strain ATCC BAA-588 / NCTC 13252 / RB50) (Alcaligenes bronchisepticus), this protein is ATP phosphoribosyltransferase.